The following is a 547-amino-acid chain: CTP synthase (547 aa).

Positions 1-273 (MNNKKLKSKF…DHFILNHFQL (273 aa)) are amidoligase domain. S19 contributes to the CTP binding site. Position 19 (S19) interacts with UTP. 20–25 (SLGKGI) is an ATP binding site. Y60 provides a ligand contact to L-glutamine. ATP is bound at residue D77. Residues D77 and E147 each coordinate Mg(2+). CTP contacts are provided by residues 154 to 156 (DIE), 194 to 199 (KTKPTQ), and K230. Residues 194–199 (KTKPTQ) and K230 contribute to the UTP site. Residues 306–539 (YVILHDAYLS…VEAALLKNGK (234 aa)) form the Glutamine amidotransferase type-1 domain. L-glutamine is bound at residue G361. C388 acts as the Nucleophile; for glutamine hydrolysis in catalysis. Residues 389 to 392 (FGMQ), E412, and R466 contribute to the L-glutamine site. Catalysis depends on residues H512 and E514.

Belongs to the CTP synthase family. In terms of assembly, homotetramer.

It catalyses the reaction UTP + L-glutamine + ATP + H2O = CTP + L-glutamate + ADP + phosphate + 2 H(+). It carries out the reaction L-glutamine + H2O = L-glutamate + NH4(+). The catalysed reaction is UTP + NH4(+) + ATP = CTP + ADP + phosphate + 2 H(+). Its pathway is pyrimidine metabolism; CTP biosynthesis via de novo pathway; CTP from UDP: step 2/2. Its activity is regulated as follows. Allosterically activated by GTP, when glutamine is the substrate; GTP has no effect on the reaction when ammonia is the substrate. The allosteric effector GTP functions by stabilizing the protein conformation that binds the tetrahedral intermediate(s) formed during glutamine hydrolysis. Inhibited by the product CTP, via allosteric rather than competitive inhibition. Catalyzes the ATP-dependent amination of UTP to CTP with either L-glutamine or ammonia as the source of nitrogen. Regulates intracellular CTP levels through interactions with the four ribonucleotide triphosphates. The polypeptide is CTP synthase (Phytoplasma australiense).